The primary structure comprises 477 residues: Transcription factor Sox-9-A (477 aa).

2 disordered regions span residues 1–66 and 157–274; these read MNLL…ETED and EAER…FRDV. Over residues 27 to 42 the composition is skewed to low complexity; that stretch reads SDDSAGSPCPSGSGSD. 2 stretches are compositionally biased toward basic and acidic residues: residues 56-66 and 157-174; these read GDQELKKETED and EAER…DYKY. Residue lysine 61 forms a Glycyl lysine isopeptide (Lys-Gly) (interchain with G-Cter in SUMO) linkage. The segment at 63 to 103 is dimerization (DIM); that stretch reads ETEDEKFPVCIREAVSQVLKGYDWTLVPMPVRVNGSSKNKP. The PQA stretch occupies residues 63-103; that stretch reads ETEDEKFPVCIREAVSQVLKGYDWTLVPMPVRVNGSSKNKP. A DNA-binding region (HMG box) is located at residues 105–173; it reads VKRPMNAFMV…QHKKDHPDYK (69 aa). The segment covering 211–222 has biased composition (low complexity); sequence SPHSSSSMSEVH. Residues 224 to 308 form a transactivation domain (TAM) region; sequence PGEHSGQSQG…LPPNGHPGVG (85 aa). 2 short sequence motifs (9aaTAD) span residues 276 to 285 and 291 to 299; these read IGELSSEVIS and DVNEFDQYL. The segment at 301-384 is disordered; that stretch reads PNGHPGVGST…SDQQQQHSPQ (84 aa). Composition is skewed to polar residues over residues 308-328 and 346-361; these read GSTQ…SATT and HSLS…SQQR. The transactivation domain (TAC) stretch occupies residues 361-477; that stretch reads RTHIKTEQLS…QPVYTQLTRP (117 aa). Residue lysine 365 forms a Glycyl lysine isopeptide (Lys-Gly) (interchain with G-Cter in SUMO) linkage. The segment covering 370 to 384 has biased composition (low complexity); sequence SPSHYSDQQQQHSPQ. A 9aaTAD 3 motif is present at residues 428–436; sequence SGLYSTFSY. The interval 446-477 is disordered; that stretch reads TPIADTTGVPSIPQTHSPQHWEQPVYTQLTRP. A compositionally biased stretch (polar residues) spans 453–477; that stretch reads GVPSIPQTHSPQHWEQPVYTQLTRP.

In terms of assembly, interacts with the sumoylation factors ube2i/ubc9 and sumo1. In terms of processing, sumoylated. Lys-365 is the major site of sumoylation, although sumoylation at Lys-61 also occurs. Sumoylation plays a key role in regulating formation of the neural crest and otic placode. In terms of tissue distribution, from mid-gastrula (stage 10.5-11), expressed in a ring around the blastopore, with expression decreasing toward the dorsal side. At stage 12, expression around the blastopore decreases and begins to increase lateral to the neural plate in the presumptive neural crest, where expression dramatically increases around stage 14. Also expressed in the otic placode as early as stage 13/14. By the tailbud stage expression is restricted to the otic cup and then throughout the otic vesicle, with more intense staining at the dorsal-most region, the prospective region of the semicircular canals and endolymphatic duct. At the early tailbud stage (stage 23), expressed in migrating cranial neural crest cells and in the trunk neural crest. Also expressed in the genital ridges, developing eye, nasal placode and prospective pineal gland. Around stage 25, expression is down-regulated in the trunk neural crest but persists in the migrating cranial crest cells as they populate the pharyngeal arches, otic placode, developing eye, genital ridges and notochord. By stage 31, expression remains strong in the pharyngeal arches. Also expressed in the pancreas; first expressed at stage 25 in the pancreatic anlagen, dorsally in diverticulum. As development proceeds, expression continues in pancreatic tissue, being restricted to ventral and dorsal pancreatic buds.

It is found in the nucleus. Its subcellular location is the cytoplasm. In terms of biological role, transcription factor that plays a key role in chondrocytes differentiation and skeletal development. Specifically binds the 5'-ACAAAG-3' DNA motif present in enhancers and super-enhancers and promotes expression of genes important for chondrogenesis, including COL2A1. Plays a central role in successive steps of chondrocyte differentiation. Absolutely required for precartilaginous condensation, the first step in chondrogenesis during which skeletal progenitors differentiate into prechondrocytes. Together with SOX5 and SOX6, required for overt chondrogenesis when condensed prechondrocytes differentiate into early stage chondrocytes, the second step in chondrogenesis. Later, required to direct hypertrophic maturation and block osteoblast differentiation of growth plate chondrocytes: maintains chondrocyte columnar proliferation, delays prehypertrophy and then prevents osteoblastic differentiation of chondrocytes. Also required for chondrocyte hypertrophy, both indirectly, by keeping the lineage fate of chondrocytes, and directly, by remaining present in upper hypertrophic cells. Low lipid levels are the main nutritional determinant for chondrogenic commitment of skeletal progenitor cells: when lipids levels are low, FOXO transcription factors promote expression of SOX9, which induces chondrogenic commitment and suppresses fatty acid oxidation. In addition to cartilage development, also acts as a regulator of proliferation and differentiation in epithelial stem/progenitor cells. Involved in development of the cranial neural crest, which is fated to form skeletal elements. Also required for otic placode specification during inner ear development. The chain is Transcription factor Sox-9-A (sox9-a) from Xenopus laevis (African clawed frog).